The sequence spans 64 residues: Neuropeptide-like 4 (64 aa).

An N-terminal signal peptide occupies residues 1-18 (MFKLLVVVFAALFAAALA). 2 propeptides span residues 19 to 40 (VPAPVARANPAPIPIASPEPAP) and 63 to 64 (YG).

The protein resides in the secreted. This Drosophila melanogaster (Fruit fly) protein is Neuropeptide-like 4 (Nplp4).